Reading from the N-terminus, the 192-residue chain is Holliday junction branch migration complex subunit RuvA (192 aa).

A domain I region spans residues 1 to 64 (MLGRLTGLLA…EDAQVLFGFL (64 aa)). A domain II region spans residues 65 to 139 (TAPERETFRM…GKLGADLGPA (75 aa)). A flexible linker region spans residues 139 to 143 (AIGGK). The interval 144–192 (PASDAQADILQALIALGYSEREAQAAVKALPAEVGVSDGIKLALKALAR) is domain III.

This sequence belongs to the RuvA family. In terms of assembly, homotetramer. Forms an RuvA(8)-RuvB(12)-Holliday junction (HJ) complex. HJ DNA is sandwiched between 2 RuvA tetramers; dsDNA enters through RuvA and exits via RuvB. An RuvB hexamer assembles on each DNA strand where it exits the tetramer. Each RuvB hexamer is contacted by two RuvA subunits (via domain III) on 2 adjacent RuvB subunits; this complex drives branch migration. In the full resolvosome a probable DNA-RuvA(4)-RuvB(12)-RuvC(2) complex forms which resolves the HJ.

It localises to the cytoplasm. Its function is as follows. The RuvA-RuvB-RuvC complex processes Holliday junction (HJ) DNA during genetic recombination and DNA repair, while the RuvA-RuvB complex plays an important role in the rescue of blocked DNA replication forks via replication fork reversal (RFR). RuvA specifically binds to HJ cruciform DNA, conferring on it an open structure. The RuvB hexamer acts as an ATP-dependent pump, pulling dsDNA into and through the RuvAB complex. HJ branch migration allows RuvC to scan DNA until it finds its consensus sequence, where it cleaves and resolves the cruciform DNA. The chain is Holliday junction branch migration complex subunit RuvA from Methylibium petroleiphilum (strain ATCC BAA-1232 / LMG 22953 / PM1).